Consider the following 239-residue polypeptide: tRNA1(Val) (adenine(37)-N6)-methyltransferase (239 aa).

Belongs to the methyltransferase superfamily. tRNA (adenine-N(6)-)-methyltransferase family.

It localises to the cytoplasm. The catalysed reaction is adenosine(37) in tRNA1(Val) + S-adenosyl-L-methionine = N(6)-methyladenosine(37) in tRNA1(Val) + S-adenosyl-L-homocysteine + H(+). Its function is as follows. Specifically methylates the adenine in position 37 of tRNA(1)(Val) (anticodon cmo5UAC). The chain is tRNA1(Val) (adenine(37)-N6)-methyltransferase from Trichodesmium erythraeum (strain IMS101).